A 170-amino-acid polypeptide reads, in one-letter code: Microfibrillar-associated protein 5 (170 aa).

The signal sequence occupies residues 1-20; that stretch reads MTFFGPKVLLLLTALIMSSG. A Cell attachment site motif is present at residues 30 to 32; sequence RGD. N-linked (GlcNAc...) asparagine glycosylation is present at Asn76.

This sequence belongs to the MFAP family. In terms of assembly, interacts with TGFB2. Interacts with BMP2. Interacts with FBN1 (via N-terminal domain) and FBN2. Post-translationally, forms intermolecular disulfide bonds either with other MAGP-2 molecules or with other components of the microfibrils. Associated with fibrillin-containing microfibrils of the developing nuchal ligament.

The protein localises to the secreted. Its subcellular location is the extracellular space. It localises to the extracellular matrix. May play a role in hematopoiesis. In the cardiovascular system, could regulate growth factors or participate in cell signaling in maintaining large vessel integrity. Component of the elastin-associated microfibrils. The protein is Microfibrillar-associated protein 5 (MFAP5) of Bos taurus (Bovine).